The following is a 312-amino-acid chain: MKLLSGNSNRPLSQAIAEYLDMPLTRAQVRRFADLEVFVTIDENVRGEDVFVIQSTSYPANDNLMELLICIDALKRASGKRITAVIPYFGYARQDRKTGGRTPISAKLVANLITRSGADRVLTMDLHAGQIQGFFDIPTDNLLPSRLMAEDIRRHYPMGDDLMVVSPDVGGVVRARALAKRLDDADLAIVDKRRSGPGQSEVMNIIGDVKDRRCILFDDIADSAGTLCNAAQALMAHGAKSVSAYITHGVLSGAAADRVANSVLTELVVTDSIEASDPAKACPKIRYVSCAPLIGEAIRRIANEESVSKLFD.

ATP is bound by residues 34–36 (DLE) and 93–94 (RQ). Mg(2+)-binding residues include His-127 and Asp-168. Lys-192 is a catalytic residue. D-ribose 5-phosphate-binding positions include Arg-194, Asp-218, and 222-226 (DSAGT).

Belongs to the ribose-phosphate pyrophosphokinase family. Class I subfamily. As to quaternary structure, homohexamer. Mg(2+) is required as a cofactor.

Its subcellular location is the cytoplasm. The catalysed reaction is D-ribose 5-phosphate + ATP = 5-phospho-alpha-D-ribose 1-diphosphate + AMP + H(+). Its pathway is metabolic intermediate biosynthesis; 5-phospho-alpha-D-ribose 1-diphosphate biosynthesis; 5-phospho-alpha-D-ribose 1-diphosphate from D-ribose 5-phosphate (route I): step 1/1. In terms of biological role, involved in the biosynthesis of the central metabolite phospho-alpha-D-ribosyl-1-pyrophosphate (PRPP) via the transfer of pyrophosphoryl group from ATP to 1-hydroxyl of ribose-5-phosphate (Rib-5-P). This chain is Ribose-phosphate pyrophosphokinase, found in Caulobacter vibrioides (strain ATCC 19089 / CIP 103742 / CB 15) (Caulobacter crescentus).